The chain runs to 518 residues: G-protein coupled receptor 161 (518 aa).

The Extracellular segment spans residues 1–26; sequence MNSSSDGANEGAGAAADNGPTKVAES. A glycan (N-linked (GlcNAc...) asparagine) is linked at asparagine 2. The helical transmembrane segment at 27-47 threads the bilayer; it reads IAIIIIDILICLGNLVIVVTL. Topologically, residues 48–59 are cytoplasmic; it reads YKKSYLLSLSNK. The chain crosses the membrane as a helical span at residues 60-80; sequence FVFSLTFSNLLLSMLVLPFVV. Residues 81 to 97 are Extracellular-facing; it reads VSSILREWIFGVVWCNF. A disulfide bridge links cysteine 95 with cysteine 173. Asparagine 96 carries N-linked (GlcNAc...) asparagine glycosylation. A helical membrane pass occupies residues 98-118; that stretch reads SALLYMLISSASMLTLGIIAI. Residues 119 to 138 are Cytoplasmic-facing; the sequence is DRYYAVLYPMVYPMKITGNR. A helical membrane pass occupies residues 139 to 159; the sequence is AVLALVYVWLHSLIGCLPPLF. Topologically, residues 160-185 are extracellular; sequence GWSTLEFDHFKWMCVAAWHKEAGYTA. The helical transmembrane segment at 186 to 206 threads the bilayer; that stretch reads FWQVWCALLPFIVMMICYGFI. At 207–264 the chain is on the cytoplasmic side; the sequence is FRVARIKARKIHCGTVIIVQEASQKNGRKNSSTSTSSSGSRKNGFSSIVYSANQCKAL. The chain crosses the membrane as a helical span at residues 265–285; that stretch reads ITILVVIGAFVLTWGPYMIVI. Residues 286-301 lie on the Extracellular side of the membrane; it reads STEALKGKNSVSPVLE. The helical transmembrane segment at 302 to 322 threads the bilayer; sequence TLATWLSFTSAICHPLIYGLW. At 323–518 the chain is on the cytoplasmic side; sequence NKTVRKELLG…GNIETSKCDV (196 aa). A disordered region spans residues 429 to 448; it reads EVEQKNDARTMPTQPTAPSE. A compositionally biased stretch (polar residues) spans 439 to 448; sequence MPTQPTAPSE.

It belongs to the G-protein coupled receptor 1 family.

It is found in the cell projection. The protein localises to the cilium membrane. It localises to the cell membrane. Its function is as follows. Key negative regulator of Shh signaling during neural tube development. Recruited to primary cilia and acts as a regulator of the PKA-dependent basal repression machinery in Shh signaling by increasing cAMP levels, leading to promote the PKA-dependent processing of gli3 into gli3r and repress the Shh signaling. In presence of shh, it is removed from primary cilia, preventing its activity and allowing activation of the Shh signaling. The sequence is that of G-protein coupled receptor 161 (gpr161) from Xenopus tropicalis (Western clawed frog).